A 224-amino-acid chain; its full sequence is Cytidylate kinase (224 aa).

Position 11-19 (11-19 (GPAAAGKST)) interacts with ATP.

Belongs to the cytidylate kinase family. Type 1 subfamily.

Its subcellular location is the cytoplasm. It carries out the reaction CMP + ATP = CDP + ADP. It catalyses the reaction dCMP + ATP = dCDP + ADP. This chain is Cytidylate kinase, found in Listeria innocua serovar 6a (strain ATCC BAA-680 / CLIP 11262).